Consider the following 112-residue polypeptide: ATP-dependent Clp protease adapter protein ClpS (112 aa).

Belongs to the ClpS family. Binds to the N-terminal domain of the chaperone ClpA.

Involved in the modulation of the specificity of the ClpAP-mediated ATP-dependent protein degradation. The protein is ATP-dependent Clp protease adapter protein ClpS of Rhodococcus jostii (strain RHA1).